Consider the following 302-residue polypeptide: Rhomboid-related protein 2 (302 aa).

The segment at 1–38 is disordered; it reads MAVAHEMEMESVNLNMEREGKEEPEEEKMKGNGEGKDF. Positions 16 to 38 are enriched in basic and acidic residues; sequence MEREGKEEPEEEKMKGNGEGKDF. 7 helical membrane passes run 71–91, 127–147, 158–178, 182–202, 211–231, 244–264, and 277–297; these read PLFIILISLAELAVFIYYAVW, LVHAGVQHIVGNLLMQIVLGI, VGLVYLAGVLAGSLASSIFDP, LVGASGGVYALMGGYFMNVIV, FGIVRLLVIILIVASDMGFAL, VSFAAHIAGGFAGMSIGYTVF, and FWIAIAAYVACLLFAVFFNIF. Residue Ser-186 is the Nucleophile of the active site. His-249 is an active-site residue.

The protein belongs to the peptidase S54 family. Proteolytic processing of the proenzyme produces an N- and a C-terminal fragment. The processing is required for activation of the protease.

The protein localises to the cell membrane. The enzyme catalyses Cleaves type-1 transmembrane domains using a catalytic dyad composed of serine and histidine that are contributed by different transmembrane domains.. In terms of biological role, involved in regulated intramembrane proteolysis and the subsequent release of functional polypeptides from their membrane anchors. Known substrate: EFNB3. This is Rhomboid-related protein 2 (Rhbdl2) from Mus musculus (Mouse).